Here is a 268-residue protein sequence, read N- to C-terminus: Eukaryotic translation initiation factor 3 subunit G-2 (268 aa).

The RRM domain occupies 187 to 265 (SAVRISNLSE…LILCVEWSKP (79 aa)).

This sequence belongs to the eIF-3 subunit G family. In terms of assembly, component of the eukaryotic translation initiation factor 3 (eIF-3) complex. The eIF-3 complex interacts with pix.

Its subcellular location is the cytoplasm. RNA-binding component of the eukaryotic translation initiation factor 3 (eIF-3) complex, which is involved in protein synthesis of a specialized repertoire of mRNAs and, together with other initiation factors, stimulates binding of mRNA and methionyl-tRNAi to the 40S ribosome. The eIF-3 complex specifically targets and initiates translation of a subset of mRNAs involved in cell proliferation. This subunit can bind 18S rRNA. In Drosophila willistoni (Fruit fly), this protein is Eukaryotic translation initiation factor 3 subunit G-2.